The following is a 329-amino-acid chain: MKNMHVLLLCGGGGSEHEVSLRSANFLEQQLGLVPGVEVTRVEMFADRWFSADGRECKLGLDKLLSFDSVARPVDYVVPCIHGYPGETGDLQSFLELAGLPYLGCDAEASKICFNKISTKLWLSAIGIPNTPYLFLTEQNDAALTEAKAALAKWGKVFIKAASQGSSVGCYSASNETDLLQGIKDAFGYSEQVLIEKAVKPRELEVAVYQYGDELIATYPGEICVPQDKFYTYEEKYSSASHTATSLKAEGLTQAQADAIHEYALKAFRQLKLTHLSRIDFFLTEEGEILLNEINTFPGMTSISMFPKLLEHHGHSFAHYLEQILRKPA.

One can recognise an ATP-grasp domain in the interval 120–326; sequence KLWLSAIGIP…FAHYLEQILR (207 aa). 150-205 provides a ligand contact to ATP; it reads ALAKWGKVFIKAASQGSSVGCYSASNETDLLQGIKDAFGYSEQVLIEKAVKPRELE. Asp-280, Glu-293, and Asn-295 together coordinate Mg(2+).

It belongs to the D-alanine--D-alanine ligase family. The cofactor is Mg(2+). Mn(2+) is required as a cofactor.

Its subcellular location is the cytoplasm. It carries out the reaction 2 D-alanine + ATP = D-alanyl-D-alanine + ADP + phosphate + H(+). Its pathway is cell wall biogenesis; peptidoglycan biosynthesis. Its function is as follows. Cell wall formation. The polypeptide is D-alanine--D-alanine ligase (Aeromonas salmonicida (strain A449)).